A 129-amino-acid polypeptide reads, in one-letter code: Fluoride-specific ion channel FluC (129 aa).

Helical transmembrane passes span 4 to 24 (VLIVMLGGFIGANLRYWLGEW), 30 to 50 (GFPTGTFVINAIGCFLLGWLL), 63 to 83 (WSLLLGTGLIGSFTTFSTFSV), and 95 to 115 (IVASLYVFGSIFLGIGLAYIG). 2 residues coordinate Na(+): G73 and T76.

The protein belongs to the fluoride channel Fluc/FEX (TC 1.A.43) family.

It is found in the cell membrane. It carries out the reaction fluoride(in) = fluoride(out). Its activity is regulated as follows. Na(+) is not transported, but it plays an essential structural role and its presence is essential for fluoride channel function. In terms of biological role, fluoride-specific ion channel. Important for reducing fluoride concentration in the cell, thus reducing its toxicity. The polypeptide is Fluoride-specific ion channel FluC (Oceanobacillus iheyensis (strain DSM 14371 / CIP 107618 / JCM 11309 / KCTC 3954 / HTE831)).